The primary structure comprises 1549 residues: VPS10 homolog 1 (1549 aa).

The N-terminal stretch at Met-1–Ala-21 is a signal peptide. The Lumenal portion of the chain corresponds to Glu-22–Thr-1369. BNR repeat units follow at residues Glu-57–Thr-68, Tyr-101–Pro-112, Ile-159–Gln-170, Ile-228–Glu-239, Lys-393–Asn-404, and Phe-465–Leu-476. N-linked (GlcNAc...) asparagine glycosylation is present at Asn-479. BNR repeat units follow at residues Tyr-511–Glu-522 and Tyr-740–Arg-751. Asn-769 carries an N-linked (GlcNAc...) asparagine glycan. The stretch at Tyr-837 to Glu-848 is one BNR 9 repeat. An N-linked (GlcNAc...) asparagine glycan is attached at Asn-986. BNR repeat units lie at residues Lys-1040–Phe-1051, Phe-1119–Glu-1130, and Ser-1160–Asp-1171. Residues Gly-1370–Val-1390 form a helical membrane-spanning segment. Topologically, residues Tyr-1391–Lys-1549 are cytoplasmic. Residues Glu-1479–Lys-1549 form a disordered region. Polar residues predominate over residues Asp-1489–Glu-1501. Residues Ala-1535–Lys-1549 show a composition bias toward basic and acidic residues.

The protein belongs to the VPS10-related sortilin family.

It is found in the golgi apparatus. The protein localises to the trans-Golgi network membrane. Its subcellular location is the endosome membrane. Functionally, functions as a sorting receptor in the Golgi compartment required for the intracellular sorting and delivery of soluble vacuolar proteins, like carboxypeptidase Y (CPY) and proteinase A. The sequence is that of VPS10 homolog 1 (VTH1) from Saccharomyces cerevisiae (strain ATCC 204508 / S288c) (Baker's yeast).